The following is a 171-amino-acid chain: ATP synthase subunit b (171 aa).

The helical transmembrane segment at 13-33 (GVEWGTTFVTLVTFVILIILL) threads the bilayer.

This sequence belongs to the ATPase B chain family. As to quaternary structure, F-type ATPases have 2 components, F(1) - the catalytic core - and F(0) - the membrane proton channel. F(1) has five subunits: alpha(3), beta(3), gamma(1), delta(1), epsilon(1). F(0) has three main subunits: a(1), b(2) and c(10-14). The alpha and beta chains form an alternating ring which encloses part of the gamma chain. F(1) is attached to F(0) by a central stalk formed by the gamma and epsilon chains, while a peripheral stalk is formed by the delta and b chains.

The protein resides in the cell membrane. Its function is as follows. F(1)F(0) ATP synthase produces ATP from ADP in the presence of a proton or sodium gradient. F-type ATPases consist of two structural domains, F(1) containing the extramembraneous catalytic core and F(0) containing the membrane proton channel, linked together by a central stalk and a peripheral stalk. During catalysis, ATP synthesis in the catalytic domain of F(1) is coupled via a rotary mechanism of the central stalk subunits to proton translocation. Functionally, component of the F(0) channel, it forms part of the peripheral stalk, linking F(1) to F(0). In Staphylococcus epidermidis (strain ATCC 12228 / FDA PCI 1200), this protein is ATP synthase subunit b.